The sequence spans 504 residues: UDP-GalNAc:beta-1,3-N-acetylgalactosaminyltransferase 2 (504 aa).

At 1 to 3 the chain is on the cytoplasmic side; sequence MRN. Residues 4-24 form a helical; Signal-anchor for type II membrane protein membrane-spanning segment; the sequence is WLVLLCPCVLGAALHLWHLWL. Over 25 to 504 the chain is Lumenal; it reads RSPPDPHNTG…DPCQCEAKVR (480 aa). Residues N117 and N176 are each glycosylated (N-linked (GlcNAc...) asparagine).

This sequence belongs to the glycosyltransferase 31 family. Post-translationally, N-glycosylated. As to expression, present in testis (at protein level). In testis, it is mainly detected in the middle layers of seminiferous tubules at stages XII to II. Strongly expressed in primary and secondary spermatocytes and early round spermatids, but not in spermatogonia, elongating or elongated spermatids, or in Leydig or Sertoli cells.

The protein localises to the golgi apparatus membrane. It is found in the endoplasmic reticulum. The catalysed reaction is 3-O-(N-acetyl-beta-D-glucosaminyl-(1-&gt;4)-alpha-D-mannosyl)-L-threonyl-[protein] + UDP-N-acetyl-alpha-D-galactosamine = 3-O-[beta-D-GalNAc-(1-&gt;3)-beta-D-GlcNAc-(1-&gt;4)-alpha-D-Man]-L-Thr-[protein] + UDP + H(+). It participates in protein modification; protein glycosylation. In terms of biological role, beta-1,3-N-acetylgalactosaminyltransferase that synthesizes a unique carbohydrate structure, GalNAc-beta-1-3GlcNAc, on N- and O-glycans. Has no galactose nor galactosaminyl transferase activity toward any acceptor substrate. Involved in alpha-dystroglycan (DAG1) glycosylation: acts coordinately with GTDC2/POMGnT2 to synthesize a GalNAc-beta3-GlcNAc-beta-terminus at the 4-position of protein O-mannose in the biosynthesis of the phosphorylated O-mannosyl trisaccharide (N-acetylgalactosamine-beta-3-N-acetylglucosamine-beta-4-(phosphate-6-)mannose), a carbohydrate structure present in alpha-dystroglycan, which is required for binding laminin G-like domain-containing extracellular proteins with high affinity. This chain is UDP-GalNAc:beta-1,3-N-acetylgalactosaminyltransferase 2 (B3galnt2), found in Mus musculus (Mouse).